The following is a 598-amino-acid chain: Arginine--tRNA ligase (598 aa).

Positions 131–141 (ANPTGPMHVGH) match the 'HIGH' region motif. The interval 288–309 (KLPPPKSKKGQPPPQPQPDEEG) is disordered.

The protein belongs to the class-I aminoacyl-tRNA synthetase family. As to quaternary structure, monomer.

The protein localises to the cytoplasm. It carries out the reaction tRNA(Arg) + L-arginine + ATP = L-arginyl-tRNA(Arg) + AMP + diphosphate. The protein is Arginine--tRNA ligase of Anaeromyxobacter dehalogenans (strain 2CP-1 / ATCC BAA-258).